The primary structure comprises 170 residues: ATP synthase subunit b (170 aa).

A helical transmembrane segment spans residues 20-42; it reads QLLAMLVLLALLKKFALGPLLNI.

This sequence belongs to the ATPase B chain family. F-type ATPases have 2 components, F(1) - the catalytic core - and F(0) - the membrane proton channel. F(1) has five subunits: alpha(3), beta(3), gamma(1), delta(1), epsilon(1). F(0) has three main subunits: a(1), b(2) and c(10-14). The alpha and beta chains form an alternating ring which encloses part of the gamma chain. F(1) is attached to F(0) by a central stalk formed by the gamma and epsilon chains, while a peripheral stalk is formed by the delta and b chains.

Its subcellular location is the cell membrane. In terms of biological role, f(1)F(0) ATP synthase produces ATP from ADP in the presence of a proton or sodium gradient. F-type ATPases consist of two structural domains, F(1) containing the extramembraneous catalytic core and F(0) containing the membrane proton channel, linked together by a central stalk and a peripheral stalk. During catalysis, ATP synthesis in the catalytic domain of F(1) is coupled via a rotary mechanism of the central stalk subunits to proton translocation. Functionally, component of the F(0) channel, it forms part of the peripheral stalk, linking F(1) to F(0). This Bacillus velezensis (strain DSM 23117 / BGSC 10A6 / LMG 26770 / FZB42) (Bacillus amyloliquefaciens subsp. plantarum) protein is ATP synthase subunit b.